Here is a 151-residue protein sequence, read N- to C-terminus: UPF0208 membrane protein Ent638_2839 (151 aa).

A run of 2 helical transmembrane segments spans residues 46–65 (YAIR…QIAL) and 69–91 (LGPA…WWLG).

The protein belongs to the UPF0208 family.

The protein localises to the cell inner membrane. The chain is UPF0208 membrane protein Ent638_2839 from Enterobacter sp. (strain 638).